The primary structure comprises 187 residues: Shikimate kinase (187 aa).

18–23 (GCGKST) contacts ATP. S22 is a Mg(2+) binding site. Residues D40, R64, and G86 each coordinate substrate. R128 provides a ligand contact to ATP. R147 provides a ligand contact to substrate. ATP is bound at residue R164.

The protein belongs to the shikimate kinase family. In terms of assembly, monomer. It depends on Mg(2+) as a cofactor.

The protein localises to the cytoplasm. It catalyses the reaction shikimate + ATP = 3-phosphoshikimate + ADP + H(+). It participates in metabolic intermediate biosynthesis; chorismate biosynthesis; chorismate from D-erythrose 4-phosphate and phosphoenolpyruvate: step 5/7. Functionally, catalyzes the specific phosphorylation of the 3-hydroxyl group of shikimic acid using ATP as a cosubstrate. In Rhodopirellula baltica (strain DSM 10527 / NCIMB 13988 / SH1), this protein is Shikimate kinase.